A 211-amino-acid polypeptide reads, in one-letter code: MYQPDFPTVPFRLGLYPVVDSVEWIERLLESGVRTIQLRIKDKRDEEVEADVIAAIALGRRYNARLFINDYWRLAIKHRAYGVHLGQEDLETTDLKAIQAAGLRLGVSTHDDMEIDVALAAKPSYIALGHVFPTQTKQMPSAPQGLAQLASHIERLADYPTVAIGGISLERAPAVLATGVGSIAVVSAITQAADWREATAELLAIAGVGDE.

Residues Gln-37–Lys-41 and Asn-69 contribute to the 4-amino-2-methyl-5-(diphosphooxymethyl)pyrimidine site. Mg(2+) contacts are provided by Asp-70 and Asp-89. 4-amino-2-methyl-5-(diphosphooxymethyl)pyrimidine is bound at residue Ser-108. Thr-134–Thr-136 provides a ligand contact to 2-[(2R,5Z)-2-carboxy-4-methylthiazol-5(2H)-ylidene]ethyl phosphate. A 4-amino-2-methyl-5-(diphosphooxymethyl)pyrimidine-binding site is contributed by Lys-137. Residues Gly-166 and Val-186–Ser-187 contribute to the 2-[(2R,5Z)-2-carboxy-4-methylthiazol-5(2H)-ylidene]ethyl phosphate site.

It belongs to the thiamine-phosphate synthase family. Requires Mg(2+) as cofactor.

The catalysed reaction is 2-[(2R,5Z)-2-carboxy-4-methylthiazol-5(2H)-ylidene]ethyl phosphate + 4-amino-2-methyl-5-(diphosphooxymethyl)pyrimidine + 2 H(+) = thiamine phosphate + CO2 + diphosphate. It catalyses the reaction 2-(2-carboxy-4-methylthiazol-5-yl)ethyl phosphate + 4-amino-2-methyl-5-(diphosphooxymethyl)pyrimidine + 2 H(+) = thiamine phosphate + CO2 + diphosphate. The enzyme catalyses 4-methyl-5-(2-phosphooxyethyl)-thiazole + 4-amino-2-methyl-5-(diphosphooxymethyl)pyrimidine + H(+) = thiamine phosphate + diphosphate. Its pathway is cofactor biosynthesis; thiamine diphosphate biosynthesis; thiamine phosphate from 4-amino-2-methyl-5-diphosphomethylpyrimidine and 4-methyl-5-(2-phosphoethyl)-thiazole: step 1/1. Condenses 4-methyl-5-(beta-hydroxyethyl)thiazole monophosphate (THZ-P) and 2-methyl-4-amino-5-hydroxymethyl pyrimidine pyrophosphate (HMP-PP) to form thiamine monophosphate (TMP). In Salmonella typhimurium (strain LT2 / SGSC1412 / ATCC 700720), this protein is Thiamine-phosphate synthase.